We begin with the raw amino-acid sequence, 973 residues long: Isoleucine--tRNA ligase, mitochondrial (973 aa).

A 'HIGH' region motif is present at residues 87–97; that stretch reads PFANGRLHIGH. A 'KMSKS' region motif is present at residues 625–629; that stretch reads KQSKS. Lys-628 contacts ATP.

This sequence belongs to the class-I aminoacyl-tRNA synthetase family.

The protein resides in the cytoplasm. Its subcellular location is the mitochondrion matrix. The catalysed reaction is tRNA(Ile) + L-isoleucine + ATP = L-isoleucyl-tRNA(Ile) + AMP + diphosphate. The polypeptide is Isoleucine--tRNA ligase, mitochondrial (ism1) (Schizosaccharomyces pombe (strain 972 / ATCC 24843) (Fission yeast)).